We begin with the raw amino-acid sequence, 346 residues long: Large ribosomal subunit protein uL10 (346 aa).

Residues 307-346 (AAAVAKEPEKKEEVKEEEEEEEEEDHSEEDGMAGLGSLFG) form a disordered region. Over residues 321-337 (KEEEEEEEEEDHSEEDG) the composition is skewed to acidic residues.

The protein belongs to the universal ribosomal protein uL10 family. In terms of assembly, part of the 50S ribosomal subunit. Forms part of the ribosomal stalk which helps the ribosome interact with GTP-bound translation factors. Forms both a pentameric L10(L12)2(L12)2 and heptameric L10(L12)2(L12)2(L12)2 complex, where L10 forms an elongated spine to which the L12 dimers bind in a sequential fashion. The proportion of heptameric complexes increases during cell growth.

Functionally, forms part of the ribosomal stalk, playing a central role in the interaction of the ribosome with GTP-bound translation factors. This Methanosarcina barkeri (strain Fusaro / DSM 804) protein is Large ribosomal subunit protein uL10.